Reading from the N-terminus, the 121-residue chain is Large ribosomal subunit protein bL17 (121 aa).

Belongs to the bacterial ribosomal protein bL17 family. As to quaternary structure, part of the 50S ribosomal subunit. Contacts protein L32.

The chain is Large ribosomal subunit protein bL17 from Metamycoplasma arthritidis (strain 158L3-1) (Mycoplasma arthritidis).